Consider the following 325-residue polypeptide: Hydroxymethylglutaryl-CoA lyase, mitochondrial (325 aa).

The N-terminal 27 residues, 1 to 27, are a transit peptide targeting the mitochondrion; the sequence is MAAMRKAVPRRLVGLASLRAVSTSSMG. In terms of domain architecture, Pyruvate carboxyltransferase spans 33-300; sequence VKIVEVGPRD…HTGVNLQKLL (268 aa). Arginine 41 contributes to the substrate binding site. An a divalent metal cation-binding site is contributed by aspartate 42. Position 48 is an N6-acetyllysine; alternate (lysine 48). The residue at position 48 (lysine 48) is an N6-succinyllysine; alternate. Residue lysine 111 is modified to N6-acetyllysine. N6-acetyllysine; alternate occurs at positions 137 and 179. N6-succinyllysine; alternate occurs at positions 137 and 179. 2 residues coordinate a divalent metal cation: histidine 233 and histidine 235. The active site involves cysteine 266. Asparagine 275 contacts a divalent metal cation. Residues 323–325 carry the Microbody targeting signal motif; it reads CKL. Lysine 324 is subject to N6-acetyllysine.

Belongs to the HMG-CoA lyase family. Homodimer; disulfide-linked. Can also form homotetramers.

The protein resides in the mitochondrion matrix. The protein localises to the peroxisome. It carries out the reaction (3S)-3-hydroxy-3-methylglutaryl-CoA = acetoacetate + acetyl-CoA. The protein operates within metabolic intermediate metabolism; (S)-3-hydroxy-3-methylglutaryl-CoA degradation; acetoacetate from (S)-3-hydroxy-3-methylglutaryl-CoA: step 1/1. In terms of biological role, mitochondrial 3-hydroxy-3-methylglutaryl-CoA lyase that catalyzes a cation-dependent cleavage of (S)-3-hydroxy-3-methylglutaryl-CoA into acetyl-CoA and acetoacetate, a key step in ketogenesis. Terminal step in leucine catabolism. Ketone bodies (beta-hydroxybutyrate, acetoacetate and acetone) are essential as an alternative source of energy to glucose, as lipid precursors and as regulators of metabolism. In Pongo abelii (Sumatran orangutan), this protein is Hydroxymethylglutaryl-CoA lyase, mitochondrial (HMGCL).